A 145-amino-acid chain; its full sequence is Endoribonuclease YbeY (145 aa).

Zn(2+) contacts are provided by H109, H113, and H119.

The protein belongs to the endoribonuclease YbeY family. The cofactor is Zn(2+).

The protein resides in the cytoplasm. Functionally, single strand-specific metallo-endoribonuclease involved in late-stage 70S ribosome quality control and in maturation of the 3' terminus of the 16S rRNA. The protein is Endoribonuclease YbeY of Ruthia magnifica subsp. Calyptogena magnifica.